A 202-amino-acid polypeptide reads, in one-letter code: Peptidyl-tRNA hydrolase (202 aa).

TRNA is bound at residue tyrosine 22. Histidine 27 functions as the Proton acceptor in the catalytic mechanism. Positions 69, 71, and 117 each coordinate tRNA.

This sequence belongs to the PTH family. In terms of assembly, monomer.

The protein localises to the cytoplasm. The enzyme catalyses an N-acyl-L-alpha-aminoacyl-tRNA + H2O = an N-acyl-L-amino acid + a tRNA + H(+). Its function is as follows. Hydrolyzes ribosome-free peptidyl-tRNAs (with 1 or more amino acids incorporated), which drop off the ribosome during protein synthesis, or as a result of ribosome stalling. Catalyzes the release of premature peptidyl moieties from peptidyl-tRNA molecules trapped in stalled 50S ribosomal subunits, and thus maintains levels of free tRNAs and 50S ribosomes. This Thiobacillus denitrificans (strain ATCC 25259 / T1) protein is Peptidyl-tRNA hydrolase.